A 512-amino-acid polypeptide reads, in one-letter code: MAGGMSAECPEPGPGGLQGQSPGPGRQCPPPITPTSWSLPPWRAYVAAAVLCYINLLNYMNWFIIAGVLLDIQEVFQISDNHAGLLQTVFVSCLLLSAPVFGYLGDRHSRKATMSFGILLWSGAGLSSSFISPRYSWLFFLSRGIVGTGSASYSTIAPTVLGDLFVRDQRTRVLAVFYIFIPVGSGLGYVLGSAVTMLTGNWRWALRVMPCLEAVALILLILLVPDPPRGAAETQGEGAVGGFRSSWCEDVRYLGKNWSFVWSTLGVTAMAFVTGALGFWAPKFLLEARVVHGLQPPCFQEPCSNPDSLIFGALTIMTGVIGVILGAEAARRYKKVIPGAEPLICASSLLATAPCLYLALVLAPTTLLASYVFLGLGELLLSCNWAVVADILLSVVVPRCRGTAEALQITVGHILGDAGSPYLTGLISSVLRARRPDSYLQRFRSLQQSFLCCAFVIALGGGCFLLTALYLERDETRAWQPVTGTPDSNDVDSNDLERQGLLSGAGASTEEP.

The interval 1 to 30 (MAGGMSAECPEPGPGGLQGQSPGPGRQCPP) is disordered. The next 12 helical transmembrane spans lie at 50–70 (VLCY…GVLL), 84–104 (GLLQ…FGYL), 112–132 (ATMS…SFIS), 145–165 (IVGT…GDLF), 173–193 (VLAV…VLGS), 204–224 (WALR…ILLV), 260–280 (FVWS…LGFW), 309–329 (LIFG…GAEA), 343–365 (LICA…LAPT), 377–397 (GELL…SVVV), 411–431 (VGHI…SSVL), and 450–470 (FLCC…TALY). A disordered region spans residues 481 to 512 (PVTGTPDSNDVDSNDLERQGLLSGAGASTEEP).

This sequence belongs to the major facilitator superfamily. Spinster (TC 2.A.1.49) family.

The protein localises to the membrane. Functionally, sphingolipid transporter. The chain is Protein spinster homolog 3 (SPNS3) from Homo sapiens (Human).